Here is a 206-residue protein sequence, read N- to C-terminus: Ribosomal RNA small subunit methyltransferase G (206 aa).

Residues glycine 74, leucine 79, 125–126 (VE), and arginine 140 each bind S-adenosyl-L-methionine.

The protein belongs to the methyltransferase superfamily. RNA methyltransferase RsmG family.

The protein resides in the cytoplasm. The catalysed reaction is guanosine(527) in 16S rRNA + S-adenosyl-L-methionine = N(7)-methylguanosine(527) in 16S rRNA + S-adenosyl-L-homocysteine. In terms of biological role, specifically methylates the N7 position of guanine in position 527 of 16S rRNA. The chain is Ribosomal RNA small subunit methyltransferase G from Shewanella amazonensis (strain ATCC BAA-1098 / SB2B).